The following is a 648-amino-acid chain: A-type voltage-gated potassium channel KCND1 (648 aa).

Residues 1–183 (MAAGVATWLP…RAFENPHTST (183 aa)) lie on the Cytoplasmic side of the membrane. Positions 2-20 (AAGVATWLPFARAAAVGWL) are interaction with KCNIP1, KCNIP2, and other family members. An interaction with KCNIP2 region spans residues 2–20 (AAGVATWLPFARAAAVGWL). Residues His104, Cys131, and Cys132 each contribute to the Zn(2+) site. A disordered region spans residues 144–164 (AERLAEDEEAEQAGDGPTLPA). Residues 184–205 (AALVFYYVTGFFIAVSVIANVV) form a helical membrane-spanning segment. At 206–230 (ETIPCRSPTRRPPREQPCGDRFPLA) the chain is on the extracellular side. A helical transmembrane segment spans residues 231–252 (FFCMDTACVLIFTGEYLLRLFA). Residues 253–263 (APSRCRFLRSV) are Cytoplasmic-facing. A helical membrane pass occupies residues 264–284 (MSLIDVVAILPYYIGLFMPKN). Topologically, residues 285-287 (EDV) are extracellular. A helical; Voltage-sensor membrane pass occupies residues 288–308 (SGAFVTLRVFRVFRIFKFSRH). Topologically, residues 309 to 323 (SQGLRILGYTLKSCA) are cytoplasmic. Positions 310 to 323 (QGLRILGYTLKSCA) are S4-S5 linker. A helical transmembrane segment spans residues 324–345 (SELGFLLFSLTMAIIIFATVMF). Topologically, residues 346-359 (YAEKGTNKTNFTSI) are extracellular. N-linked (GlcNAc...) asparagine glycans are attached at residues Asn352 and Asn355. The helical intramembrane region spans 360–371 (PAAFWYTIVTMT). Residues 372–377 (TLGYGD) carry the Selectivity filter motif. The stretch at 372-379 (TLGYGDMV) is an intramembrane region. At 380 to 386 (PSTIAGK) the chain is on the extracellular side. The helical transmembrane segment at 387 to 415 (IFGSICSLSGVLVIALPVPVIVSNFSRIY) threads the bilayer. The Cytoplasmic portion of the chain corresponds to 416–648 (HQNQRADKRR…LPETVKISSL (233 aa)). The residue at position 458 (Ser458) is a Phosphoserine. Positions 474-489 (FEQQHHHLLHCLEKTT) are mediates dendritic targeting. A required for dendritic targeting region spans residues 474–489 (FEQQHHHLLHCLEKTT). Ser555 bears the Phosphoserine mark. The tract at residues 601 to 636 (IPTPPANTPDESQPSSPGGGGGGASSTLRNSSLGTP) is disordered.

It belongs to the potassium channel family. D (Shal) (TC 1.A.1.2) subfamily. Kv4.1/KCND1 sub-subfamily. Component of heteromultimeric potassium channels. Identified in potassium channel complexes containing KCND1, KCND2, KCND3, KCNIP1, KCNIP2, KCNIP3, KCNIP4, DPP6 and DPP10.

The protein localises to the cell membrane. It carries out the reaction K(+)(in) = K(+)(out). A-type voltage-gated potassium channel that mediates transmembrane potassium transport in excitable membranes in the brain. Mediates A-type current I(SA) in suprachiasmatic nucleus (SCN) neurons. Exhibits a low-threshold A-type current with a hyperpolarized steady-state inactivation midpoint and the recovery process was steeply voltage-dependent, with recovery being markedly faster at more negative potentials. May regulates repetitive firing rates in the suprachiasmatic nucleus (SCN) neurons and circadian rhythms in neuronal excitability and behavior. Contributes to the regulation of the circadian rhythm of action potential firing in suprachiasmatic nucleus neurons, which regulates the circadian rhythm of locomotor activity. The regulatory subunit KCNIP1 modulates the kinetics of channel inactivation, increases the current amplitudes and accelerates recovery from inactivation, shifts activation in a depolarizing direction. The regulatory subunit DPP10 decreases the voltage sensitivity of the inactivation channel gating. The protein is A-type voltage-gated potassium channel KCND1 of Bos taurus (Bovine).